A 459-amino-acid polypeptide reads, in one-letter code: Zinc finger chaperone zpr1 (459 aa).

2 consecutive C4-type zinc fingers follow at residues 38–70 and 259–291; these read CMEC…CPHC and CPSC…CDRC.

This sequence belongs to the ZPR1 family.

Its subcellular location is the cytoplasm. The protein resides in the nucleus. Its function is as follows. Acts as a protein folding chaperone for elongation factor 1-alpha. The protein is Zinc finger chaperone zpr1 of Schizosaccharomyces pombe (strain 972 / ATCC 24843) (Fission yeast).